Reading from the N-terminus, the 304-residue chain is UDP-N-acetylenolpyruvoylglucosamine reductase (304 aa).

An FAD-binding PCMH-type domain is found at 31–196; that stretch reads KVGGPADYLA…ISAKFNLKPG (166 aa). R175 is an active-site residue. The active-site Proton donor is the S225. The active site involves E295.

This sequence belongs to the MurB family. The cofactor is FAD.

It is found in the cytoplasm. It catalyses the reaction UDP-N-acetyl-alpha-D-muramate + NADP(+) = UDP-N-acetyl-3-O-(1-carboxyvinyl)-alpha-D-glucosamine + NADPH + H(+). It participates in cell wall biogenesis; peptidoglycan biosynthesis. Cell wall formation. This is UDP-N-acetylenolpyruvoylglucosamine reductase from Streptococcus thermophilus (strain ATCC BAA-491 / LMD-9).